The sequence spans 370 residues: MASSTSARTPAGKRVVNQEELRRLMKEKQRLSTNRKRIESPFAKYNRLGQLSCALCNTPVKSELLWQTHVLGKQHRERVAELKGAKGATQGPSAGTAPQPTKRKTTDVESQDAKKAKASVDQVQPSTSASSANFEKSGKEATRVASSKTGLGLLPDYEEEEEEEEEEELGGGEERRDSSKHLPDAQGREHSLASPRETTSNVLPNDPFNTNPPKAPLVPHSGSIEKAEIHEKVVERRENTAEALPEGFFDDPEVDAKVRKVDAPKDQMDKEWDEFQKAMRQVNTISEAIVAEEDEEGRLDRQIGEIDEQIECYRRVEKLRNRQDEIKNKLKEVLTIKELQKKEEENVDSDDEGELQDLLSQDWRVKGALL.

Disordered regions lie at residues 1 to 21 (MASS…QEEL) and 75 to 220 (HRER…LVPH). Residue Ala-2 is modified to N-acetylalanine. Positions 16-40 (VNQEELRRLMKEKQRLSTNRKRIES) form a coiled coil. A C2H2-type zinc finger spans residues 53–75 (CALCNTPVKSELLWQTHVLGKQH). Over residues 90–99 (QGPSAGTAPQ) the composition is skewed to polar residues. Over residues 104-115 (KTTDVESQDAKK) the composition is skewed to basic and acidic residues. Over residues 121 to 134 (DQVQPSTSASSANF) the composition is skewed to polar residues. Residues 156 to 171 (DYEEEEEEEEEEELGG) are compositionally biased toward acidic residues. Residues 172-191 (GEERRDSSKHLPDAQGREHS) are compositionally biased toward basic and acidic residues. Positions 196 to 212 (RETTSNVLPNDPFNTNP) are enriched in polar residues. Position 223 is a phosphoserine (Ser-223). A coiled-coil region spans residues 310–338 (IECYRRVEKLRNRQDEIKNKLKEVLTIKE). 2 positions are modified to phosphoserine: Ser-349 and Ser-360.

Component of the XAB2 complex, a multimeric protein complex composed of XAB2, PRPF19, AQR, ZNF830, ISY1, and PPIE; this complex binds preferentially to RNA. Interacts with XAB2. Identified in a pentameric intron-binding (IB) complex composed of AQR, XAB2, ISY1, ZNF830 and PPIE that is incorporated into the spliceosome as a preassembled complex. The IB complex does not contain PRPF19. Post-translationally, phosphorylated in response to DNA damage by the cell cycle checkpoint kinases ATR/ATM.

Its subcellular location is the nucleus. The protein localises to the chromosome. The protein resides in the nucleus speckle. Functionally, may play a role in pre-mRNA splicing as component of the spliceosome. Acts as an important regulator of the cell cycle that participates in the maintenance of genome integrity. During cell cycle progression in embryonic fibroblast, prevents replication fork collapse, double-strand break formation and cell cycle checkpoint activation. Controls mitotic cell cycle progression and cell survival in rapidly proliferating intestinal epithelium and embryonic stem cells. During the embryo preimplantation, controls different aspects of M phase. During early oocyte growth, plays a role in oocyte survival by preventing chromosomal breaks formation, activation of TP63 and reduction of transcription. This chain is Zinc finger protein 830, found in Rattus norvegicus (Rat).